A 380-amino-acid chain; its full sequence is Cobalt-precorrin-5B C(1)-methyltransferase (380 aa).

The protein belongs to the CbiD family.

It catalyses the reaction Co-precorrin-5B + S-adenosyl-L-methionine = Co-precorrin-6A + S-adenosyl-L-homocysteine. It participates in cofactor biosynthesis; adenosylcobalamin biosynthesis; cob(II)yrinate a,c-diamide from sirohydrochlorin (anaerobic route): step 6/10. Its function is as follows. Catalyzes the methylation of C-1 in cobalt-precorrin-5B to form cobalt-precorrin-6A. The polypeptide is Cobalt-precorrin-5B C(1)-methyltransferase (Salinispora tropica (strain ATCC BAA-916 / DSM 44818 / JCM 13857 / NBRC 105044 / CNB-440)).